A 76-amino-acid chain; its full sequence is Defensin-like protein 155 (76 aa).

Positions 1 to 27 are cleaved as a signal peptide; it reads MAKISCSYLLILMLALSVFSVVEKAKG. 4 disulfides stabilise this stretch: C31–C76, C40–C59, C45–C70, and C49–C72.

It belongs to the DEFL family.

The protein resides in the secreted. This Arabidopsis thaliana (Mouse-ear cress) protein is Defensin-like protein 155 (LCR36).